Consider the following 728-residue polypeptide: Cellulose synthase-like protein E6 (728 aa).

The next 2 helical transmembrane spans lie at 21-43 (AVYR…YRAT) and 53-73 (AAWL…VITQ). Residues Asp141 and Asp446 contribute to the active site. 5 helical membrane-spanning segments follow: residues 523–543 (LWAA…LGLV), 546–566 (TPLF…VFCV), 646–666 (PEFV…VAGL), 669–689 (IMAG…LIVI), and 707–727 (IPLP…LLPI).

The protein belongs to the glycosyltransferase 2 family. Plant cellulose synthase-like E subfamily.

The protein localises to the golgi apparatus membrane. Its function is as follows. Thought to be a Golgi-localized beta-glycan synthase that polymerize the backbones of noncellulosic polysaccharides (hemicelluloses) of plant cell wall. This chain is Cellulose synthase-like protein E6 (CSLE6), found in Oryza sativa subsp. japonica (Rice).